Here is a 209-residue protein sequence, read N- to C-terminus: Molybdenum cofactor guanylyltransferase (209 aa).

GTP is bound by residues leucine 14 to glycine 16, lysine 31, and aspartate 104. Aspartate 104 lines the Mg(2+) pocket.

Belongs to the MobA family. As to quaternary structure, monomer. The cofactor is Mg(2+).

The protein localises to the cytoplasm. It carries out the reaction Mo-molybdopterin + GTP + H(+) = Mo-molybdopterin guanine dinucleotide + diphosphate. In terms of biological role, transfers a GMP moiety from GTP to Mo-molybdopterin (Mo-MPT) cofactor (Moco or molybdenum cofactor) to form Mo-molybdopterin guanine dinucleotide (Mo-MGD) cofactor. The polypeptide is Molybdenum cofactor guanylyltransferase (Helicobacter pylori (strain J99 / ATCC 700824) (Campylobacter pylori J99)).